The primary structure comprises 436 residues: 3-ketoacyl-CoA thiolase (436 aa).

Cys-99 (acyl-thioester intermediate) is an active-site residue. Catalysis depends on proton acceptor residues His-392 and Cys-422.

Belongs to the thiolase-like superfamily. Thiolase family. As to quaternary structure, heterotetramer of two alpha chains (FadJ) and two beta chains (FadI).

The protein localises to the cytoplasm. The enzyme catalyses an acyl-CoA + acetyl-CoA = a 3-oxoacyl-CoA + CoA. Its pathway is lipid metabolism; fatty acid beta-oxidation. Functionally, catalyzes the final step of fatty acid oxidation in which acetyl-CoA is released and the CoA ester of a fatty acid two carbons shorter is formed. The protein is 3-ketoacyl-CoA thiolase of Escherichia coli (strain ATCC 8739 / DSM 1576 / NBRC 3972 / NCIMB 8545 / WDCM 00012 / Crooks).